The following is a 170-amino-acid chain: Flavin reductase (NADPH) (170 aa).

It belongs to the non-flavoprotein flavin reductase family.

The enzyme catalyses reduced riboflavin + NADP(+) = riboflavin + NADPH + 2 H(+). Catalyzes the NADH-dependent reduction of FAD to provide FADH2 for the halogenase RebH. The sequence is that of Flavin reductase (NADPH) (rbmH) from Lentzea aerocolonigenes (Lechevalieria aerocolonigenes).